Consider the following 440-residue polypeptide: Tubulin beta-3 chain (440 aa).

GTP-binding residues include Gln-2, Glu-60, Ser-129, Gly-133, Thr-134, Gly-135, Asn-195, and Asn-217. Glu-60 contributes to the Mg(2+) binding site. Residues 411-440 (SEYQQYQDATADEEGEYEDEEEEEPEHGYE) are disordered. Residues 420 to 440 (TADEEGEYEDEEEEEPEHGYE) are compositionally biased toward acidic residues.

Belongs to the tubulin family. Dimer of alpha and beta chains. A typical microtubule is a hollow water-filled tube with an outer diameter of 25 nm and an inner diameter of 15 nM. Alpha-beta heterodimers associate head-to-tail to form protofilaments running lengthwise along the microtubule wall with the beta-tubulin subunit facing the microtubule plus end conferring a structural polarity. Microtubules usually have 13 protofilaments but different protofilament numbers can be found in some organisms and specialized cells. The cofactor is Mg(2+).

The protein localises to the cytoplasm. It localises to the cytoskeleton. Its function is as follows. Tubulin is the major constituent of microtubules, a cylinder consisting of laterally associated linear protofilaments composed of alpha- and beta-tubulin heterodimers. Microtubules grow by the addition of GTP-tubulin dimers to the microtubule end, where a stabilizing cap forms. Below the cap, tubulin dimers are in GDP-bound state, owing to GTPase activity of alpha-tubulin. The sequence is that of Tubulin beta-3 chain (TUBB3) from Pisum sativum (Garden pea).